A 374-amino-acid chain; its full sequence is Fe(2+) transport protein 1 (374 aa).

Residues 1 to 33 form the signal peptide; that stretch reads MATPRTLVPILPPVAALLLLLVAASSIPILAAA. The Extracellular segment spans residues 34–62; the sequence is QPADACGGAPDQAAADGACHDVPRALRLK. A helical transmembrane segment spans residues 63–83; it reads LIAIPTILVSSVVGVCLPLLS. At 84-92 the chain is on the cytoplasmic side; the sequence is RSVPALRPD. A helical transmembrane segment spans residues 93 to 113; sequence GGLFAVVKAFASGVILATGYM. At 114–137 the chain is on the extracellular side; it reads HVLPDAFNNLTSPCLPRKPWSEFP. Residues 138–158 traverse the membrane as a helical segment; the sequence is FAAFVAMLAAVSTLMADSLML. Over 159–219 the chain is Cytoplasmic; that stretch reads TYYNRSKPRP…ATQVQLRRNR (61 aa). Residues 166-199 are disordered; sequence PRPSSGGDVAAVADHGESPDQGHRHGHGHGHGHG. Over residues 179-188 the composition is skewed to basic and acidic residues; the sequence is DHGESPDQGH. A helical membrane pass occupies residues 220 to 240; it reads VVVQVLEIGIVVHSVVIGLGM. Over 241-251 the chain is Extracellular; it reads GASQNVCTIRP. Residues 252–272 traverse the membrane as a helical segment; that stretch reads LVAAMCFHQMFEGMGLGGCIL. Residues 273-282 lie on the Cytoplasmic side of the membrane; it reads QAEYGRRMRS. Residues 283 to 303 traverse the membrane as a helical segment; the sequence is VLVFFFSTTTPFGIALGLALT. Topologically, residues 304–313 are extracellular; the sequence is RVYRDNSPTA. A helical membrane pass occupies residues 314–334; the sequence is LIVVGLLNAASAGLLHYMALV. Over 335–353 the chain is Cytoplasmic; that stretch reads ELLAADFMGPKLQGNVRLQ. A helical membrane pass occupies residues 354–374; it reads LAAFLAVLLGAGGMSVMAKWA.

This sequence belongs to the ZIP transporter (TC 2.A.5) family. Expressed in companion cells in the upper region of the root.

The protein localises to the cell membrane. Iron transporter involved in the uptake of iron from the rhizosphere across the plasma membrane in the root epidermal layer. May also transport other divalent cations. This chain is Fe(2+) transport protein 1 (IRT1), found in Oryza sativa subsp. japonica (Rice).